The following is a 455-amino-acid chain: Probable ATP-dependent RNA helicase DDX47 (455 aa).

The disordered stretch occupies residues 1–21; that stretch reads MAADEEPDSPSGALQTAAEEE. At alanine 2 the chain carries N-acetylalanine. Serine 9 is modified (phosphoserine). Positions 24–52 match the Q motif motif; the sequence is KTFKDLGVTDVLCEACDQLGWAKPTKIQI. The 172-residue stretch at 55 to 226 folds into the Helicase ATP-binding domain; that stretch reads IPLALQGRDI…RAALKNPVKC (172 aa). 68 to 75 provides a ligand contact to ATP; that stretch reads AETGSGKT. Threonine 149 is modified (phosphothreonine). The DEAD box motif lies at 174-177; sequence DEAD. The region spanning 237-397 is the Helicase C-terminal domain; sequence KLQQYYLFIP…VFPTQDEEVM (161 aa). The segment at 412–455 is disordered; the sequence is MELREHGEKKKRKREDAGDDDDKEGAIGVRNKVAGGKMKKRKGR.

It belongs to the DEAD box helicase family. DDX47/RRP3 subfamily. Interacts with AGO1 and AGO2. Interacts with GABARAP. Interacts with NOL8; the interaction is RNA-dependent.

Its subcellular location is the nucleus. The protein resides in the nucleolus. The catalysed reaction is ATP + H2O = ADP + phosphate + H(+). Its function is as follows. Involved in apoptosis. May have a role in rRNA processing and mRNA splicing. Associates with pre-rRNA precursors. The polypeptide is Probable ATP-dependent RNA helicase DDX47 (Ddx47) (Mus musculus (Mouse)).